We begin with the raw amino-acid sequence, 358 residues long: DnaJ homolog subfamily B member 11 (358 aa).

A signal peptide spans 1 to 22; it reads MAPQNLGTFCLLLLYLIGTVIA. Residues 25–90 enclose the J domain; that stretch reads DFYKILGVPR…EKRKQYDTYG (66 aa). Thr-188 carries the phosphothreonine modification. Residue Asn-261 is glycosylated (N-linked (GlcNAc...) asparagine).

Part of a large chaperone multiprotein complex comprising DNAJB11, HSP90B1, HSPA5, HYOU, PDIA2, PDIA4, PDIA6, PPIB, SDF2L1, UGGT1 and very small amounts of ERP29, but not, or at very low levels, CALR nor CANX. Binds to denatured substrates in an ATP-independent manner. Interacts via the J domain with HSPA5 in an ATP-dependent manner. Post-translationally, contains high-mannose Endo H-sensitive carbohydrates. In terms of processing, cys-169, Cys-171, Cys-193 and Cys-196 form intramolecular disulfide bonds. The preferential partner for each Cys is not known.

The protein resides in the endoplasmic reticulum lumen. As a co-chaperone for HSPA5 it is required for proper folding, trafficking or degradation of proteins. Binds directly to both unfolded proteins that are substrates for ERAD and nascent unfolded peptide chains, but dissociates from the HSPA5-unfolded protein complex before folding is completed. May help recruiting HSPA5 and other chaperones to the substrate. Stimulates HSPA5 ATPase activity. It is necessary for maturation and correct trafficking of PKD1. The sequence is that of DnaJ homolog subfamily B member 11 (DNAJB11) from Bos taurus (Bovine).